The primary structure comprises 271 residues: Gasdermin bGSDM (271 aa).

Cysteine 7 carries S-palmitoyl cysteine lipidation. Beta stranded transmembrane passes span 74-90 (IAGT…GLSV), 102-120 (TLGV…FEFS), 168-185 (RINV…GLNL), and 194-210 (ANVK…TVSF).

It belongs to the bacterial gasdermin family. As to quaternary structure, monomer. Forms large, homooligomeric ring-shaped pores when inserted in membranes. In terms of processing, palmitoylation helps stabilize the inactive state; may self palmitoylate. Palmitoylation plays a significant role in pore formation.

The protein localises to the cytoplasm. It is found in the cell inner membrane. The full-length protein before cleavage is inactive: intramolecular interactions between the N-terminal domain and the C-terminal region as well as the lipid modification, mediate autoinhibition. The pyroptosis-like-inducing activity is carried by the released N-terminal domain (Gasdermin bGSDM, N-terminus). In terms of biological role, involved in defense against bacteriophages. When this probable 4 gene operon (bGSDM-FE772_23060-FE772_23065-FE772_23070) is inserted into E.coli it provides nearly 100-fold protection against phages T5 and T6 and about 8-fold against phage T4. The operon without bGSDM no longer protects against phage. Cleavage of this precursor by its dedicated protease(s) releases the active moiety (gasdermin bGSDM, N-terminus) which inserts into membranes, forming pores and triggering cell death. Its function is as follows. Pore-forming protein that causes membrane permeabilization via a pyroptosis-like activity. Makes ring-like pores when released. The protein is Gasdermin bGSDM of Lysobacter enzymogenes.